The sequence spans 209 residues: Orotate phosphoribosyltransferase (209 aa).

5-phospho-alpha-D-ribose 1-diphosphate contacts are provided by residues arginine 96, lysine 100, histidine 102, and 122–130 (EDLISTGGS). Serine 126 serves as a coordination point for orotate.

This sequence belongs to the purine/pyrimidine phosphoribosyltransferase family. PyrE subfamily. In terms of assembly, homodimer. The cofactor is Mg(2+).

It carries out the reaction orotidine 5'-phosphate + diphosphate = orotate + 5-phospho-alpha-D-ribose 1-diphosphate. It functions in the pathway pyrimidine metabolism; UMP biosynthesis via de novo pathway; UMP from orotate: step 1/2. Its function is as follows. Catalyzes the transfer of a ribosyl phosphate group from 5-phosphoribose 1-diphosphate to orotate, leading to the formation of orotidine monophosphate (OMP). The polypeptide is Orotate phosphoribosyltransferase (Lactococcus lactis subsp. cremoris (strain MG1363)).